The chain runs to 177 residues: Endoribonuclease YbeY (177 aa).

Residues His142, His146, and His152 each coordinate Zn(2+).

Belongs to the endoribonuclease YbeY family. It depends on Zn(2+) as a cofactor.

The protein localises to the cytoplasm. Single strand-specific metallo-endoribonuclease involved in late-stage 70S ribosome quality control and in maturation of the 3' terminus of the 16S rRNA. This is Endoribonuclease YbeY from Synechococcus sp. (strain CC9311).